Reading from the N-terminus, the 243-residue chain is Small ribosomal subunit protein uS3 (243 aa).

Residues 39-110 (IRTFIQKKYG…QVRINVVEVE (72 aa)) form the KH type-2 domain. A disordered region spans residues 216–243 (KTIPVGASPKRKAGRRPQQFEDRSNENS). Positions 233–243 (QQFEDRSNENS) are enriched in basic and acidic residues.

This sequence belongs to the universal ribosomal protein uS3 family. As to quaternary structure, part of the 30S ribosomal subunit. Forms a tight complex with proteins S10 and S14.

Its function is as follows. Binds the lower part of the 30S subunit head. Binds mRNA in the 70S ribosome, positioning it for translation. In Prochlorococcus marinus (strain MIT 9312), this protein is Small ribosomal subunit protein uS3.